The chain runs to 748 residues: Transducin-like enhancer protein 4 (748 aa).

Disordered regions lie at residues 1 to 20 (MIRD…PHQP) and 157 to 332 (LPIK…DPLA). The segment at 1–112 (MIRDLSKMYR…SQEQQQLQAQ (112 aa)) is q domain. A GP domain region spans residues 113-179 (HLLTWTWSAC…HQRDRDSIKS (67 aa)). Residues 158–177 (PIKDEKKHHDNDHQRDRDSI) are compositionally biased toward basic and acidic residues. Residues 178 to 189 (KSSSVSPSASFR) show a composition bias toward low complexity. The segment at 180-249 (SSVSPSASFR…SPRGSPAHSP (70 aa)) is ccN domain. Phosphoserine is present on residues Ser183, Ser187, Ser191, and Ser197. Over residues 190 to 227 (GSEKHRNSTDYSSESKKQKTEEKEIAARYDSDGEKSDD) the composition is skewed to basic and acidic residues. At Lys212 the chain carries N6-acetyllysine. Ser220 carries the phosphoserine modification. Ser225 is modified (phosphoserine; by CK2). Ser240 bears the Phosphoserine; by CDK1 mark. Ser244 and Ser248 each carry phosphoserine. The segment covering 248–264 (SPRENGLDKTRLLKKDA) has biased composition (basic and acidic residues). The segment at 250-427 (RENGLDKTRL…PGGKPAYSFH (178 aa)) is SP domain. Position 256 is an N6-acetyllysine (Lys256). A compositionally biased stretch (low complexity) spans 265–280 (PISPASVASSSSTPSS). At Ser267 the chain carries Phosphoserine. A compositionally biased stretch (polar residues) spans 292–303 (TTPVSKSNTPTP). Phosphothreonine is present on Thr293. Residues Ser296 and Ser298 each carry the phosphoserine modification. Thr300, Thr302, Thr309, and Thr315 each carry phosphothreonine. Ser394 bears the Phosphoserine mark. WD repeat units lie at residues 460 to 498 (NHGE…NKSP), 506 to 545 (NRDN…PRIK), 550 to 589 (SSAP…LVRQ), 592 to 631 (GHTD…QLQQ), 633 to 672 (DFTS…KYQL), 674 to 713 (LHES…SIFQ), and 715 to 748 (KESS…EVIY).

It belongs to the WD repeat Groucho/TLE family. As to quaternary structure, homooligomer and heterooligomer with other family members. Binds PAX5, LEF1, TCF7, TCF7L1 and TCF7L2. Interacts with ZNF703; TLE4 may mediate ZNF703 transcriptional repression. Interacts with SIX3 and SIX6. Interacts with PAX2. Phosphorylated. PAX5 binding increases phosphorylation. In terms of processing, ubiquitinated by XIAP/BIRC4.

It localises to the nucleus. Functionally, transcriptional corepressor that binds to a number of transcription factors. Inhibits the transcriptional activation mediated by PAX5, and by CTNNB1 and TCF family members in Wnt signaling. The effects of full-length TLE family members may be modulated by association with dominant-negative AES. Essential for the transcriptional repressor activity of SIX3 during retina and lens development and for SIX3 transcriptional auto-repression. Involved in transcriptional repression of GNRHR and enhances MSX1-mediated transcriptional repression of CGA/alpha-GSU. The sequence is that of Transducin-like enhancer protein 4 (Tle4) from Rattus norvegicus (Rat).